Here is a 469-residue protein sequence, read N- to C-terminus: MSIPKISQVKDLTRIERIGAHSHIRGLGIDDSLEPREISQGMVGQVGARKAAGLILQMIKEGKIAGRAILIGGEPGTGKTAIAMGMAQSLGEKTPFTAIAASEIFSLEMSKTEALTQAFRRSIGVRIKEETEVICGEVVDIQIDRPATGSGAKVGKLTLKTTSMDALYDLGAKMIDSLTKEKVQNGDIIRIDKGTGKITKLGRSLSRVRDHEISGSKVNFIECPEGEIQQRRTETHTVSLHEIDVINSRAQGFFALFAGDIGEIKSEVREQINQKVAEWKEEGKAEIVPGVLFIDEVHMLDIECFSYLNRALEDDMSPILIIATNRGNTTIRGTDYKAPHGIPLDLLDRLLIINTQPYTEKDIYKILKIRCEEEDVDIQEDALQLLTKIGVETSLRYAIHLITSSSLVSVKRKGTDVSVDDIKKVYDLFVDVKRSTKYLKDYQDEYLYNSQPETTATKTNEEQQTMQTA.

73 to 80 (GEPGTGKT) is a binding site for ATP.

The protein belongs to the RuvB family. Forms homohexameric rings. May form a dodecamer with rvb1 made of two stacked hexameric rings. Component of the chromatin remodeling Ino80 complex. Component of the RNA polymerase II holoenzyme complex.

Its subcellular location is the nucleus. It carries out the reaction ATP + H2O = ADP + phosphate + H(+). Functionally, has double-stranded DNA-stimulated ATPase and ATP-dependent DNA helicase (5' to 3') activity suggesting a role in nuclear processes such as recombination and transcription. Proposed core component of the chromatin remodeling Ino80 complex which is involved in transcriptional regulation, DNA replication and probably DNA repair. The protein is RuvB-like helicase 2 (rvb2) of Dictyostelium discoideum (Social amoeba).